Here is a 533-residue protein sequence, read N- to C-terminus: Flavin-containing monooxygenase 5 (533 aa).

Arg-5 bears the Dimethylated arginine mark. FAD-binding positions include 10-14 (GGGVS), Glu-33, and 41-42 (LW). Ser-54 bears the Phosphoserine mark. Tyr-56 carries the phosphotyrosine modification. A Phosphoserine modification is found at Ser-58. 62-63 (NT) is an FAD binding site. 196–199 (SGGD) is a binding site for NADP(+). Ser-280 is modified (phosphoserine). Thr-284 is modified (phosphothreonine). Ser-401 carries the post-translational modification Phosphoserine. The helical transmembrane segment at 510-530 (MVSAVTTGCFMLAVVFFAIIM) threads the bilayer.

The protein belongs to the FMO family. The cofactor is FAD. As to expression, expressed in liver.

It localises to the microsome membrane. Its subcellular location is the endoplasmic reticulum membrane. The enzyme catalyses N,N-dimethylaniline + NADPH + O2 + H(+) = N,N-dimethylaniline N-oxide + NADP(+) + H2O. It catalyses the reaction NADPH + O2 + H(+) = H2O2 + NADP(+). The catalysed reaction is heptan-2-one + NADPH + O2 + H(+) = pentyl acetate + NADP(+) + H2O. It carries out the reaction octan-3-one + NADPH + O2 + H(+) = pentyl propanoate + NADP(+) + H2O. The enzyme catalyses octan-3-one + NADPH + O2 + H(+) = ethyl hexanoate + NADP(+) + H2O. It catalyses the reaction hexan-3-one + NADPH + O2 + H(+) = ethyl butanoate + NADP(+) + H2O. The catalysed reaction is hexan-3-one + NADPH + O2 + H(+) = propyl propanoate + NADP(+) + H2O. It carries out the reaction heptan-4-one + NADPH + O2 + H(+) = propyl butanoate + NADP(+) + H2O. The enzyme catalyses (2E)-geranial + NADPH + O2 + H(+) = (1E)-2,6-dimethylhepta-1,5-dien-1-yl formate + NADP(+) + H2O. It catalyses the reaction sulcatone + NADPH + O2 + H(+) = 4-methylpent-3-en-1-yl acetate + NADP(+) + H2O. Acts as a Baeyer-Villiger monooxygenase on a broad range of substrates. Catalyzes the insertion of an oxygen atom into a carbon-carbon bond adjacent to a carbonyl, which converts ketones to esters. Active on diverse carbonyl compounds, whereas soft nucleophiles are mostly non- or poorly reactive. In contrast with other forms of FMO it is non- or poorly active on 'classical' substrates such as drugs, pesticides, and dietary components containing soft nucleophilic heteroatoms. Able to oxidize drug molecules bearing a carbonyl group on an aliphatic chain, such as nabumetone and pentoxifylline. Also, in the absence of substrates, shows slow but yet significant NADPH oxidase activity. Acts as a positive modulator of cholesterol biosynthesis as well as glucose homeostasis, promoting metabolic aging via pleiotropic effects. The protein is Flavin-containing monooxygenase 5 (FMO5) of Cavia porcellus (Guinea pig).